Here is a 61-residue protein sequence, read N- to C-terminus: Large ribosomal subunit protein uL29 (61 aa).

It belongs to the universal ribosomal protein uL29 family.

The chain is Large ribosomal subunit protein uL29 from Campylobacter curvus (strain 525.92).